A 387-amino-acid chain; its full sequence is Acetylajmalan esterase (387 aa).

Positions 1–22 (MGFARLLHLVFSLLVFAGITNG) are cleaved as a signal peptide. The active-site Nucleophile is the Ser-36. Asn-98, Asn-180, Asn-199, Asn-249, and Asn-296 each carry an N-linked (GlcNAc...) asparagine glycan. Residues Asp-337 and His-340 contribute to the active site.

This sequence belongs to the 'GDSL' lipolytic enzyme family.

The enzyme catalyses 17-O-acetylajmaline + H2O = ajmaline + acetate + H(+). The catalysed reaction is 17-O-acetylnorajmaline + H2O = norajmaline + acetate + H(+). It functions in the pathway alkaloid biosynthesis; ajmaline biosynthesis. Functionally, acetylesterase involved in the biosynthesis of ajmaline-type monoterpenoid indole alkaloids (MIAs) natural products, important plant-derived pharmaceuticals used in the therapy of heart disorders. Deacetylates 17-O-acetylajmaline and 17-O-acetylnorajmaline to produce ajmaline and norajmaline, but is inactive toward other acetylated alkaloids. This chain is Acetylajmalan esterase, found in Rauvolfia serpentina (Serpentine wood).